Consider the following 269-residue polypeptide: Surfeit locus protein 4 (269 aa).

The next 5 helical transmembrane spans lie at 64–84, 92–112, 179–199, 203–223, and 239–259; these read LLASSFVFLNLLGQLTGCILV, YACFGLFGIIALQTIAYSILW, FFSILQNIVGTALMILVAIGF, LAALTLVVWLFAINVYFNAFW, and FFQTMSVIGGLLLVVALGPGG. The Di-lysine motif signature appears at 266 to 269; it reads KKEW.

This sequence belongs to the SURF4 family. In terms of assembly, found in a complex composed at least of SURF4, TMED2 and TMED10. May interact with LMAN1. Interacts with ZFYVE27 and with KIF5A in a ZFYVE27-dependent manner. Interacts with STING1. Interacts with SAR1B. Interacts with TMEM41B.

The protein resides in the endoplasmic reticulum membrane. It localises to the endoplasmic reticulum-Golgi intermediate compartment membrane. It is found in the golgi apparatus membrane. Functionally, endoplasmic reticulum cargo receptor that mediates the export of lipoproteins by recruiting cargos into COPII vesicles to facilitate their secretion. Acts as a cargo receptor for lipoproteins bearing both APOB and APOA1, thereby regulating lipoprotein delivery and the maintenance of lipid homeostasis. Synergizes with the GTPase SAR1B to mediate transport of circulating lipoproteins. Promotes the secretion of PCSK9. Also mediates the efficient secretion of erythropoietin (EPO). May also play a role in the maintenance of the architecture of the endoplasmic reticulum-Golgi intermediate compartment and of the Golgi. This is Surfeit locus protein 4 from Bos taurus (Bovine).